The primary structure comprises 412 residues: Phosphoglycerate kinase (412 aa).

Residues 26 to 28 (DFN), arginine 42, 65 to 68 (HLGR), arginine 133, and arginine 166 each bind substrate. ATP-binding positions include lysine 217, glycine 308, glutamate 339, and 368-371 (GGDS).

It belongs to the phosphoglycerate kinase family. As to quaternary structure, monomer.

Its subcellular location is the cytoplasm. The enzyme catalyses (2R)-3-phosphoglycerate + ATP = (2R)-3-phospho-glyceroyl phosphate + ADP. The protein operates within carbohydrate degradation; glycolysis; pyruvate from D-glyceraldehyde 3-phosphate: step 2/5. The sequence is that of Phosphoglycerate kinase from Synechococcus sp. (strain JA-2-3B'a(2-13)) (Cyanobacteria bacterium Yellowstone B-Prime).